A 254-amino-acid chain; its full sequence is Alcohol dehydrogenase (254 aa).

10-33 (FVAGLGGIGLDTSREIVKSGPKNL) is a binding site for NAD(+). Residue Ser138 coordinates substrate. The active-site Proton acceptor is the Tyr151.

Belongs to the short-chain dehydrogenases/reductases (SDR) family. As to quaternary structure, homodimer.

It catalyses the reaction a primary alcohol + NAD(+) = an aldehyde + NADH + H(+). The catalysed reaction is a secondary alcohol + NAD(+) = a ketone + NADH + H(+). The sequence is that of Alcohol dehydrogenase (Adh) from Drosophila adiastola (Fruit fly).